We begin with the raw amino-acid sequence, 282 residues long: Dihydropteroate synthase (282 aa).

The 253-residue stretch at 15–267 folds into the Pterin-binding domain; that stretch reads PHVMGILNVT…DVKETVEAMR (253 aa). Asn22 lines the Mg(2+) pocket. Residues Thr62, Asp96, Asn115, Asp185, Lys221, and 255–257 contribute to the (7,8-dihydropterin-6-yl)methyl diphosphate site; that span reads RVH.

It belongs to the DHPS family. In terms of assembly, homodimer. Requires Mg(2+) as cofactor.

It carries out the reaction (7,8-dihydropterin-6-yl)methyl diphosphate + 4-aminobenzoate = 7,8-dihydropteroate + diphosphate. It functions in the pathway cofactor biosynthesis; tetrahydrofolate biosynthesis; 7,8-dihydrofolate from 2-amino-4-hydroxy-6-hydroxymethyl-7,8-dihydropteridine diphosphate and 4-aminobenzoate: step 1/2. In terms of biological role, catalyzes the condensation of para-aminobenzoate (pABA) with 6-hydroxymethyl-7,8-dihydropterin diphosphate (DHPt-PP) to form 7,8-dihydropteroate (H2Pte), the immediate precursor of folate derivatives. The polypeptide is Dihydropteroate synthase (folP) (Shigella flexneri).